A 546-amino-acid polypeptide reads, in one-letter code: Probable sucrose-6-phosphate hydrolase (546 aa).

Substrate contacts are provided by residues 105 to 108, Gln-124, 167 to 168, 228 to 229, and Glu-283; these read LLND, FS, and RD. Residue Asp-108 is part of the active site.

This sequence belongs to the glycosyl hydrolase 32 family.

The protein resides in the cytoplasm. The enzyme catalyses Hydrolysis of terminal non-reducing beta-D-fructofuranoside residues in beta-D-fructofuranosides.. It functions in the pathway glycan biosynthesis; sucrose metabolism. In terms of biological role, enables the bacterium to metabolize sucrose as a sole carbon source. This is Probable sucrose-6-phosphate hydrolase (cscA) from Vibrio cholerae serotype O1 (strain ATCC 39541 / Classical Ogawa 395 / O395).